A 238-amino-acid polypeptide reads, in one-letter code: Opacity protein opA60 (238 aa).

Residue alanine 1 is a signal peptide.

This sequence belongs to the opacity porin family.

It is found in the cell outer membrane. Its function is as follows. Implicated in a number of adherence functions. OPA proteins are implicated in pathogenesis and are subject to phase variation. The sequence is that of Opacity protein opA60 (opaH) from Neisseria gonorrhoeae.